The sequence spans 80 residues: U6-ctenitoxin-Pn1a (80 aa).

The N-terminal stretch at 1–21 is a signal peptide; the sequence is MWLKIQVFVLALALITLGIQA. Positions 22–37 are excised as a propeptide; the sequence is EPNSGPNNPLIQEEAR. 4 disulfide bridges follow: Cys39-Cys54, Cys46-Cys59, Cys53-Cys69, and Cys61-Cys67. Positions 72-80 are excised as a propeptide; it reads TLGDLFGRR.

The protein belongs to the neurotoxin 02 (plectoxin) family. 01 (Tx3) subfamily. In terms of tissue distribution, expressed by the venom gland.

It is found in the secreted. Antagonist of L-type calcium channels (Cav1/CACNA1). This chain is U6-ctenitoxin-Pn1a, found in Phoneutria nigriventer (Brazilian armed spider).